We begin with the raw amino-acid sequence, 166 residues long: NADH-quinone oxidoreductase subunit B (166 aa).

[4Fe-4S] cluster is bound by residues Cys-44, Cys-45, Cys-110, and Cys-140.

It belongs to the complex I 20 kDa subunit family. NDH-1 is composed of 14 different subunits. Subunits NuoB, C, D, E, F, and G constitute the peripheral sector of the complex. [4Fe-4S] cluster serves as cofactor.

The protein localises to the cell membrane. The catalysed reaction is a quinone + NADH + 5 H(+)(in) = a quinol + NAD(+) + 4 H(+)(out). Functionally, NDH-1 shuttles electrons from NADH, via FMN and iron-sulfur (Fe-S) centers, to quinones in the respiratory chain. The immediate electron acceptor for the enzyme in this species is believed to be a menaquinone. Couples the redox reaction to proton translocation (for every two electrons transferred, four hydrogen ions are translocated across the cytoplasmic membrane), and thus conserves the redox energy in a proton gradient. This Carboxydothermus hydrogenoformans (strain ATCC BAA-161 / DSM 6008 / Z-2901) protein is NADH-quinone oxidoreductase subunit B.